The primary structure comprises 111 residues: Prefoldin subunit 2 (111 aa).

2 coiled-coil regions span residues 1 to 36 (MEQR…KDEH) and 72 to 92 (LETK…TLIQ).

The protein belongs to the prefoldin subunit beta family. Heterohexamer of two PFD-alpha type and four PFD-beta type subunits.

Its subcellular location is the cytoplasm. Its function is as follows. Binds specifically to cytosolic chaperonin (c-CPN) and transfers target proteins to it. Binds to nascent polypeptide chain and promotes folding in an environment in which there are many competing pathways for nonnative proteins. The protein is Prefoldin subunit 2 (GIM4) of Saccharomyces cerevisiae (strain ATCC 204508 / S288c) (Baker's yeast).